The following is an 873-amino-acid chain: Leucine--tRNA ligase (873 aa).

Positions 42 to 52 (PYPSGKLHMGH) match the 'HIGH' region motif. Residues 624–643 (PVEIGGTEKMSKSKNNGVDP) are disordered. The 'KMSKS' region motif lies at 632–636 (KMSKS). Residue Lys635 participates in ATP binding.

Belongs to the class-I aminoacyl-tRNA synthetase family.

Its subcellular location is the cytoplasm. The enzyme catalyses tRNA(Leu) + L-leucine + ATP = L-leucyl-tRNA(Leu) + AMP + diphosphate. The sequence is that of Leucine--tRNA ligase from Pseudomonas paraeruginosa (strain DSM 24068 / PA7) (Pseudomonas aeruginosa (strain PA7)).